Reading from the N-terminus, the 124-residue chain is Large ribosomal subunit protein bL12 (124 aa).

The protein belongs to the bacterial ribosomal protein bL12 family. Homodimer. Part of the ribosomal stalk of the 50S ribosomal subunit. Forms a multimeric L10(L12)X complex, where L10 forms an elongated spine to which 2 to 4 L12 dimers bind in a sequential fashion. Binds GTP-bound translation factors.

Functionally, forms part of the ribosomal stalk which helps the ribosome interact with GTP-bound translation factors. Is thus essential for accurate translation. The chain is Large ribosomal subunit protein bL12 from Nautilia profundicola (strain ATCC BAA-1463 / DSM 18972 / AmH).